The chain runs to 117 residues: Large ribosomal subunit protein eL34 (117 aa).

Serine 12 carries the post-translational modification Phosphoserine. Lysine 36 and lysine 43 each carry N6-acetyllysine. A Glycyl lysine isopeptide (Lys-Gly) (interchain with G-Cter in SUMO2) cross-link involves residue lysine 108.

It belongs to the eukaryotic ribosomal protein eL34 family. In terms of assembly, component of the large ribosomal subunit.

The protein localises to the cytoplasm. It is found in the cytosol. It localises to the endoplasmic reticulum. In terms of biological role, component of the large ribosomal subunit. The ribosome is a large ribonucleoprotein complex responsible for the synthesis of proteins in the cell. This Mus musculus (Mouse) protein is Large ribosomal subunit protein eL34 (Rpl34).